The following is a 683-amino-acid chain: MALSKRELDELKPWIEKTVKRVLGFSEPTVVTAALNCVGKGMDKKKAADHLKPFLDDSTLRFVDKLFEAVEEGRSSRHSKSSSDRSRKRELKEVFGDDSEISKESSGVKKRRIPRFEEVEEEPEVIPGPPSESPGMLTKLQIKQMMEAATRQIEERKKQLSFISPPTPQPKTPSSSQPERLPIGNTIQPSQAATFMNDAIEKARKAAELQARIQAQLALKPGLIGNANMVGLANLHAMGIAPPKVELKDQTKPTPLILDEQGRTVDATGKEIELTHRMPTLKANIRAVKREQFKQQLKEKPSEDMESNTFFDPRVSIAPSQRQRRTFKFHDKGKFEKIAQRLRTKAQLEKLQAEISQAARKTGIHTSTRLALIAPKKELKEGDIPEIEWWDSYIIPNGFDLTEENPKREDYFGITNLVEHPAQLNPPVDNDTPVTLGVYLTKKEQKKLRRQTRREAQKELQEKVRLGLMPPPEPKVRISNLMRVLGTEAVQDPTKVEAHVRAQMAKRQKAHEEANAARKLTAEQRKVKKIKKLKEDISQGVHISVYRVRNLSNPAKKFKIEANAGQLYLTGVVVLHKDVNVVVVEGGPKAQKKFKRLMLHRIKWDEQTSNTKGDDDEESDEEAVKKTNKCVLVWEGTAKDRSFGEMKFKQCPTENMAREHFKKHGAEHYWDLALSESVLESTD.

Residues 1 to 87 (MALSKRELDE…HSKSSSDRSR (87 aa)) enclose the PWI domain. Positions 73–107 (GRSSRHSKSSSDRSRKRELKEVFGDDSEISKESSG) are enriched in basic and acidic residues. A disordered region spans residues 73 to 135 (GRSSRHSKSS…IPGPPSESPG (63 aa)). Residue Lys-139 forms a Glycyl lysine isopeptide (Lys-Gly) (interchain with G-Cter in SUMO2) linkage. The segment at 153 to 183 (IEERKKQLSFISPPTPQPKTPSSSQPERLPI) is disordered. A Phosphoserine modification is found at Ser-164. Position 167 is a phosphothreonine (Thr-167). Glycyl lysine isopeptide (Lys-Gly) (interchain with G-Cter in SUMO2) cross-links involve residues Lys-244 and Lys-252. Residues 416–550 (NLVEHPAQLN…VHISVYRVRN (135 aa)) are mediates interaction with SART3. Ser-619 is modified (phosphoserine).

As to quaternary structure, component of the precatalytic spliceosome (spliceosome B complex). Component of the U4/U6-U5 tri-snRNP complex, a building block of the precatalytic spliceosome (spliceosome B complex). The U4/U6-U5 tri-snRNP complex is composed of the U4, U6 and U5 snRNAs and at least PRPF3, PRPF4, PRPF6, PRPF8, PRPF31, SNRNP200, TXNL4A, SNRNP40, SNRPB, SNRPD1, SNRPD2, SNRPD3, SNRPE, SNRPF, SNRPG, DDX23, CD2BP2, PPIH, SNU13, EFTUD2, SART1 and USP39, plus LSM2, LSM3, LSM4, LSM5, LSM6, LSM7 and LSM8. Interacts directly with PRPF4. Part of a heteromeric complex containing PPIH, PRPF3 and PRPF4 that is stable in the absence of RNA. Interacts with SART3; the interaction is direct and recruits the deubiquitinase USP4 to PRPF3. Interacts with PRPF19. Interacts ('Lys-63'-linked polyubiquitinated) with PRPF8 (via the MPN (JAB/Mov34) domain); may stabilize the U4/U6-U5 tri-snRNP complex. Interacts with ERCC6. Ubiquitinated. Undergoes 'Lys-63'-linked polyubiquitination by PRPF19 and deubiquitination by USP4. 'Lys-63'-linked ubiquitination increases the affinity for PRPF8 and may regulate the assembly of the U4/U6-U5 tri-snRNP complex. In terms of tissue distribution, highly expressed in retina, liver, kidney and blood. Detected at lower levels in heart and brain.

It localises to the nucleus. Its subcellular location is the nucleus speckle. Its function is as follows. Plays a role in pre-mRNA splicing as component of the U4/U6-U5 tri-snRNP complex that is involved in spliceosome assembly, and as component of the precatalytic spliceosome (spliceosome B complex). The chain is U4/U6 small nuclear ribonucleoprotein Prp3 (PRPF3) from Homo sapiens (Human).